The chain runs to 233 residues: NAD-dependent protein deacylase (233 aa).

The Deacetylase sirtuin-type domain occupies 1 to 230 (MKNIMILSGA…ALDIENFMKD (230 aa)). 9-28 (GAGLSAPSGLKTFRDNDGLW) lines the NAD(+) pocket. Positions 53 and 56 each coordinate substrate. An NAD(+)-binding site is contributed by 88–91 (QNVD). The active-site Proton acceptor is H106. Residues C114, C117, C133, and C136 each coordinate Zn(2+). NAD(+)-binding positions include 172–174 (GTS) and 200–202 (NLE).

Belongs to the sirtuin family. Class III subfamily. Zn(2+) serves as cofactor.

Its subcellular location is the cytoplasm. It carries out the reaction N(6)-acetyl-L-lysyl-[protein] + NAD(+) + H2O = 2''-O-acetyl-ADP-D-ribose + nicotinamide + L-lysyl-[protein]. The catalysed reaction is N(6)-succinyl-L-lysyl-[protein] + NAD(+) + H2O = 2''-O-succinyl-ADP-D-ribose + nicotinamide + L-lysyl-[protein]. NAD-dependent lysine deacetylase and desuccinylase that specifically removes acetyl and succinyl groups on target proteins. Modulates the activities of several proteins which are inactive in their acylated form. This is NAD-dependent protein deacylase from Campylobacter jejuni subsp. jejuni serotype O:2 (strain ATCC 700819 / NCTC 11168).